We begin with the raw amino-acid sequence, 200 residues long: Ribonuclease HII (200 aa).

The region spanning 14–200 is the RNase H type-2 domain; the sequence is ERVAGLDEAG…HRQSFTLFRD (187 aa). A divalent metal cation-binding residues include Asp-20, Glu-21, and Asp-112.

Belongs to the RNase HII family. Requires Mn(2+) as cofactor. Mg(2+) serves as cofactor.

It localises to the cytoplasm. The enzyme catalyses Endonucleolytic cleavage to 5'-phosphomonoester.. In terms of biological role, endonuclease that specifically degrades the RNA of RNA-DNA hybrids. The sequence is that of Ribonuclease HII from Salinibacter ruber (strain DSM 13855 / M31).